Reading from the N-terminus, the 213-residue chain is Probable septum site-determining protein MinC (213 aa).

This sequence belongs to the MinC family. As to quaternary structure, interacts with MinD and FtsZ.

In terms of biological role, cell division inhibitor that blocks the formation of polar Z ring septums. Rapidly oscillates between the poles of the cell to destabilize FtsZ filaments that have formed before they mature into polar Z rings. Prevents FtsZ polymerization. This Clostridium botulinum (strain Eklund 17B / Type B) protein is Probable septum site-determining protein MinC.